The following is a 316-amino-acid chain: Transaldolase (316 aa).

Lys127 functions as the Schiff-base intermediate with substrate in the catalytic mechanism.

The protein belongs to the transaldolase family. Type 2 subfamily.

The protein resides in the cytoplasm. The enzyme catalyses D-sedoheptulose 7-phosphate + D-glyceraldehyde 3-phosphate = D-erythrose 4-phosphate + beta-D-fructose 6-phosphate. It functions in the pathway carbohydrate degradation; pentose phosphate pathway; D-glyceraldehyde 3-phosphate and beta-D-fructose 6-phosphate from D-ribose 5-phosphate and D-xylulose 5-phosphate (non-oxidative stage): step 2/3. In terms of biological role, transaldolase is important for the balance of metabolites in the pentose-phosphate pathway. This is Transaldolase from Helicobacter pylori (strain P12).